The sequence spans 216 residues: Acetate CoA-transferase subunit beta (216 aa).

The active site involves E46.

The protein belongs to the 3-oxoacid CoA-transferase subunit B family. In terms of assembly, heterotetramer composed of two alpha subunits (AtoD) and two beta subunits (AtoA).

It localises to the cytoplasm. It catalyses the reaction an acyl-CoA + acetate = a carboxylate + acetyl-CoA. The catalysed reaction is acetoacetate + acetyl-CoA = acetoacetyl-CoA + acetate. The enzyme catalyses butanoate + acetyl-CoA = butanoyl-CoA + acetate. It carries out the reaction acetoacetate + butanoyl-CoA = acetoacetyl-CoA + butanoate. It functions in the pathway lipid metabolism; short-chain fatty acid metabolism. Inhibited by p-chloromercuribenzoate. Its function is as follows. Coenzyme A transferase which is involved in short-chain fatty acid degradation and catalyzes the activation of short-chain fatty acids to their respective CoA thiolesters. During acetoacetate degradation, catalyzes the transfer of CoA from acetyl-CoA to acetoacetate by a mechanism involving a covalent enzyme-CoA compound as a reaction intermediate. Utilizes a variety of short chain acyl-CoA and carboxylic acid substrates but exhibits maximal activity with normal and 3-keto substrates. The protein is Acetate CoA-transferase subunit beta of Escherichia coli (strain K12).